The primary structure comprises 510 residues: Probable cytochrome P450 517A2 (510 aa).

A helical membrane pass occupies residues 1 to 21 (MRILIIIILIIIVFLVKDTIK). Cysteine 450 serves as a coordination point for heme.

This sequence belongs to the cytochrome P450 family. Heme is required as a cofactor.

Its subcellular location is the membrane. The sequence is that of Probable cytochrome P450 517A2 (cyp517A2) from Dictyostelium discoideum (Social amoeba).